Reading from the N-terminus, the 92-residue chain is Small ribosomal subunit protein uS19 (92 aa).

This sequence belongs to the universal ribosomal protein uS19 family.

Protein S19 forms a complex with S13 that binds strongly to the 16S ribosomal RNA. The sequence is that of Small ribosomal subunit protein uS19 from Ruegeria pomeroyi (strain ATCC 700808 / DSM 15171 / DSS-3) (Silicibacter pomeroyi).